Here is a 140-residue protein sequence, read N- to C-terminus: Class I hydrophobin B (140 aa).

A signal peptide spans 1-16 (MKFLAVVSLLAATALA). Cystine bridges form between C42/C113, C50/C107, C51/C88, and C114/C133. An N-linked (GlcNAc...) asparagine glycan is attached at N117.

Belongs to the fungal hydrophobin family. As to quaternary structure, self-assembles to form functional amyloid fibrils called rodlets. Self-assembly into fibrillar rodlets occurs spontaneously at hydrophobic:hydrophilic interfaces and the rodlets further associate laterally to form amphipathic monolayers.

The protein resides in the secreted. Its subcellular location is the spore wall. Aerial growth, conidiation, and dispersal of filamentous fungi in the environment rely upon a capability of their secreting small amphipathic proteins called hydrophobins (HPBs) with low sequence identity. Class I can self-assemble into an outermost layer of rodlet bundles on aerial cell surfaces, conferring cellular hydrophobicity that supports fungal growth, development and dispersal; whereas Class II form highly ordered films at water-air interfaces through intermolecular interactions but contribute nothing to the rodlet structure. RodB is a class I hydrophobin that, unlike rodA, is not required for rodlet formation. The chain is Class I hydrophobin B from Aspergillus fumigatus (strain ATCC MYA-4609 / CBS 101355 / FGSC A1100 / Af293) (Neosartorya fumigata).